The primary structure comprises 318 residues: Gamma-glutamyl hydrolase (318 aa).

The first 24 residues, 1–24, serve as a signal peptide directing secretion; it reads MASPGCLLCVLGLLLCGAASLELS. The 294-residue stretch at 25 to 318 folds into the Gamma-glutamyl hydrolase domain; the sequence is RPHGDTAKKP…SSFQQCYIFD (294 aa). Asn-116 is a glycosylation site (N-linked (GlcNAc...) asparagine). The active-site Nucleophile is the Cys-134. Asn-163 and Asn-203 each carry an N-linked (GlcNAc...) asparagine glycan. His-244 acts as the Proton donor in catalysis. Asn-307 is a glycosylation site (N-linked (GlcNAc...) asparagine; partial).

This sequence belongs to the peptidase C26 family. As to quaternary structure, homodimer.

It localises to the secreted. Its subcellular location is the extracellular space. The protein localises to the lysosome. It is found in the melanosome. The enzyme catalyses (6S)-5,6,7,8-tetrahydrofolyl-(gamma-L-Glu)(n) + (n-1) H2O = (6S)-5,6,7,8-tetrahydrofolate + (n-1) L-glutamate. Functionally, hydrolyzes the polyglutamate sidechains of pteroylpolyglutamates. Progressively removes gamma-glutamyl residues from pteroylpoly-gamma-glutamate to yield pteroyl-alpha-glutamate (folic acid) and free glutamate. May play an important role in the bioavailability of dietary pteroylpolyglutamates and in the metabolism of pteroylpolyglutamates and antifolates. This chain is Gamma-glutamyl hydrolase, found in Homo sapiens (Human).